Here is a 144-residue protein sequence, read N- to C-terminus: D-aminoacyl-tRNA deacylase (144 aa).

The Gly-cisPro motif, important for rejection of L-amino acids motif lies at 136–137; it reads GP.

Belongs to the DTD family. In terms of assembly, homodimer.

Its subcellular location is the cytoplasm. The catalysed reaction is glycyl-tRNA(Ala) + H2O = tRNA(Ala) + glycine + H(+). The enzyme catalyses a D-aminoacyl-tRNA + H2O = a tRNA + a D-alpha-amino acid + H(+). An aminoacyl-tRNA editing enzyme that deacylates mischarged D-aminoacyl-tRNAs. Also deacylates mischarged glycyl-tRNA(Ala), protecting cells against glycine mischarging by AlaRS. Acts via tRNA-based rather than protein-based catalysis; rejects L-amino acids rather than detecting D-amino acids in the active site. By recycling D-aminoacyl-tRNA to D-amino acids and free tRNA molecules, this enzyme counteracts the toxicity associated with the formation of D-aminoacyl-tRNA entities in vivo and helps enforce protein L-homochirality. The chain is D-aminoacyl-tRNA deacylase from Vibrio cholerae serotype O1 (strain ATCC 39541 / Classical Ogawa 395 / O395).